We begin with the raw amino-acid sequence, 506 residues long: Putative amidase (506 aa).

Active-site charge relay system residues include K121 and S196. S220 serves as the catalytic Acyl-ester intermediate.

It belongs to the amidase family.

It catalyses the reaction a monocarboxylic acid amide + H2O = a monocarboxylate + NH4(+). The chain is Putative amidase from Synechocystis sp. (strain ATCC 27184 / PCC 6803 / Kazusa).